Reading from the N-terminus, the 351-residue chain is DNA integrity scanning protein DisA (351 aa).

A DAC domain is found at 4-142 (RSGFWQVLQQ…GPMKYILRDF (139 aa)). ATP is bound by residues Gly-71, Leu-89, and 102-106 (TRHRT).

It belongs to the DisA family. As to quaternary structure, homooctamer. The cofactor is Mg(2+).

The enzyme catalyses 2 ATP = 3',3'-c-di-AMP + 2 diphosphate. In terms of biological role, participates in a DNA-damage check-point that is active prior to asymmetric division when DNA is damaged. DisA forms globular foci that rapidly scan along the chromosomes during sporulation, searching for lesions. When a lesion is present, DisA pauses at the lesion site. This triggers a cellular response that culminates in a temporary block in sporulation initiation. Its function is as follows. Also has diadenylate cyclase activity, catalyzing the condensation of 2 ATP molecules into cyclic di-AMP (c-di-AMP). c-di-AMP acts as a signaling molecule that couples DNA integrity with progression of sporulation. The rise in c-di-AMP level generated by DisA while scanning the chromosome, operates as a positive signal that advances sporulation; upon encountering a lesion, the DisA focus arrests at the damaged site and halts c-di-AMP synthesis. The chain is DNA integrity scanning protein DisA from Symbiobacterium thermophilum (strain DSM 24528 / JCM 14929 / IAM 14863 / T).